The sequence spans 84 residues: MPIIKSAIERVKTNNKANVRNTAQMSAMRTAVKKFEAAKTAGADNVDDLYLAATSAVDKAASKGLIKRNKAARDKSRMAARYAK.

The protein belongs to the bacterial ribosomal protein bS20 family.

Binds directly to 16S ribosomal RNA. This chain is Small ribosomal subunit protein bS20, found in Lactiplantibacillus plantarum (strain ATCC BAA-793 / NCIMB 8826 / WCFS1) (Lactobacillus plantarum).